A 660-amino-acid polypeptide reads, in one-letter code: Phosphatidylinositol-3-phosphate phosphatase MTMR7 (660 aa).

Residues 126 to 504 (GWLLVDLSEE…FTYKFWNGMY (379 aa)) form the Myotubularin phosphatase domain. The a 1,2-diacyl-sn-glycero-3-phospho-(1D-myo-inositol-3-phosphate) site is built by Asn250, Asn275, and Ile276. The active-site Phosphocysteine intermediate is the Cys338. Residues Ser339, Asp340, Gly341, Trp342, Asp343, Arg344, and Arg384 each coordinate a 1,2-diacyl-sn-glycero-3-phospho-(1D-myo-inositol-3-phosphate). Residues 514–548 (RQSVTDYLMAVKEESQQLEEELESLEERLEKIQKV) adopt a coiled-coil conformation. Positions 550–660 (LHGTKVKSKQ…DSDEAVFLTA (111 aa)) are disordered. Positions 566–596 (SGFSTSDHSTANTPQDYSGNSKSFPSRSPSQ) are enriched in polar residues. Phosphothreonine is present on Thr578. Basic and acidic residues predominate over residues 641-653 (APSEDSGKDRDSD).

Belongs to the protein-tyrosine phosphatase family. Non-receptor class myotubularin subfamily. Heterodimer (via C-terminus) with MTMR9 (via coiled coil domain); the interaction enhances MTMR7 catalytic activity. Does not homodimerize. Interacts with RAB1B (in GDP-bound form). In terms of tissue distribution, highly expressed in brain (at protein level). Expressed at low levels in liver, kidney and testis.

It is found in the cytoplasm. It localises to the endomembrane system. The catalysed reaction is a 1,2-diacyl-sn-glycero-3-phospho-(1D-myo-inositol-3-phosphate) + H2O = a 1,2-diacyl-sn-glycero-3-phospho-(1D-myo-inositol) + phosphate. The enzyme catalyses 1D-myo-inositol 1,3-bisphosphate + H2O = 1D-myo-inositol 1-phosphate + phosphate. With respect to regulation, interaction with MTMR9 increases phosphatase activity. Lipid phosphatase that specifically dephosphorylates the D-3 position of phosphatidylinositol 3-phosphate (PtdIns(3)P) and inositol 1,3-bisphosphate (Ins(1,3)P2). This chain is Phosphatidylinositol-3-phosphate phosphatase MTMR7, found in Mus musculus (Mouse).